The chain runs to 25 residues: Antimicrobial peptide 2 (25 aa).

As to expression, expressed by the skin glands.

It is found in the secreted. Functionally, has very strong antibacterial activity against Gram-positive bacterium S.aureus and very weak activity against Gram-negative bacterium E.coli. The chain is Antimicrobial peptide 2 from Xenopus tropicalis (Western clawed frog).